Consider the following 878-residue polypeptide: Probable ATP-dependent RNA helicase ddx10 (878 aa).

A compositionally biased stretch (basic and acidic residues) spans 1 to 15 (MNKDKSKQKPQKKEN). Disordered regions lie at residues 1 to 53 (MNKD…IDKV) and 102 to 130 (RGTN…KEKE). Positions 16 to 30 (NNNNNKNNNNNNNKT) are enriched in low complexity. The span at 31 to 53 (ENNKTNKDFTKNKFDKDAKIDKV) shows a compositional bias: basic and acidic residues. A compositionally biased stretch (polar residues) spans 102–112 (RGTNPLANISS). Residues 113–123 (TTATTTTTTAT) show a composition bias toward low complexity. The Q motif motif lies at 141 to 169 (TDFKDLPISQLTLKALTESKFLKLTDIQR). ATP-binding positions include 161–163 (FLK), glutamine 168, and 185–192 (AKTGSGKT). Residues 172-346 (LPHTLCGRDI…RLSLQEPEYI (175 aa)) form the Helicase ATP-binding domain. A DEAD box motif is present at residues 294–297 (DEAD). The Helicase C-terminal domain occupies 372–521 (KLNMLFSFIK…ILEPNPEKLV (150 aa)). The segment covering 608–618 (DKKSKGEKDID) has biased composition (basic and acidic residues). Disordered regions lie at residues 608–675 (DKKS…RKNA) and 781–878 (LQSK…KNRI). Acidic residues predominate over residues 635 to 652 (SDDEDSEDDSDFQDDSDD). Basic and acidic residues predominate over residues 665 to 674 (NIEKLFDRKN). Residues 816–850 (ENGENDSDDESNDDDVWGQEYNSDDDDDDEESESE) show a composition bias toward acidic residues. A compositionally biased stretch (basic and acidic residues) spans 860-869 (RTLEDHEESA).

Belongs to the DEAD box helicase family. DDX10/DBP4 subfamily.

Its subcellular location is the nucleus. The protein resides in the nucleolus. It catalyses the reaction ATP + H2O = ADP + phosphate + H(+). In terms of biological role, probable ATP-dependent RNA helicase which may be involved in ribosome biogenesis. In Dictyostelium discoideum (Social amoeba), this protein is Probable ATP-dependent RNA helicase ddx10 (ddx10).